The following is a 223-amino-acid chain: GrpE protein homolog, mitochondrial (223 aa).

This sequence belongs to the GrpE family. Component of the PAM complex, at least composed of mtHsp70, mge1, tim44, pam16, pam17 and pam18.

It is found in the mitochondrion matrix. Its function is as follows. Essential component of the PAM complex, a complex required for the translocation of transit peptide-containing proteins from the inner membrane into the mitochondrial matrix in an ATP-dependent manner. Seems to control the nucleotide-dependent binding of ssc1 to substrate proteins. The sequence is that of GrpE protein homolog, mitochondrial (mge1) from Schizosaccharomyces pombe (strain 972 / ATCC 24843) (Fission yeast).